The chain runs to 473 residues: Inactive pancreatic lipase-related protein 1 (473 aa).

The first 17 residues, 1 to 17, serve as a signal peptide directing secretion; sequence MLILWTIPLFLLGAAQG. 2 disulfides stabilise this stretch: Cys21–Cys27 and Cys109–Cys120. Ser171 serves as the catalytic Nucleophile. Asp194 serves as the catalytic Charge relay system. 4 residues coordinate Ca(2+): Glu205, Arg208, Asp210, and Asp213. A disulfide bond links Cys255 and Cys279. The Charge relay system role is filled by His281. 3 cysteine pairs are disulfide-bonded: Cys303–Cys314, Cys317–Cys322, and Cys451–Cys467. The 112-residue stretch at 356–467 folds into the PLAT domain; the sequence is WRYRVSLTFS…EDILLTLLPC (112 aa).

The protein belongs to the AB hydrolase superfamily. Lipase family. In terms of tissue distribution, expressed in female, but not in male, lacrimal gland. Expressed in male and female sublingual gland and pancreas.

Its subcellular location is the secreted. Functionally, may function as inhibitor of dietary triglyceride digestion. Lacks detectable lipase activity (in vitro). The polypeptide is Inactive pancreatic lipase-related protein 1 (Pnliprp1) (Mus musculus (Mouse)).